The primary structure comprises 234 residues: Large ribosomal subunit protein uL1 (234 aa).

It belongs to the universal ribosomal protein uL1 family. As to quaternary structure, part of the 50S ribosomal subunit.

Functionally, binds directly to 23S rRNA. The L1 stalk is quite mobile in the ribosome, and is involved in E site tRNA release. Protein L1 is also a translational repressor protein, it controls the translation of the L11 operon by binding to its mRNA. The protein is Large ribosomal subunit protein uL1 of Bartonella tribocorum (strain CIP 105476 / IBS 506).